A 338-amino-acid polypeptide reads, in one-letter code: Fructose-1,6-bisphosphatase class 1 1 (338 aa).

Mg(2+) is bound by residues Glu94, Asp116, Leu118, and Asp119. Residues 119-122 (DGSS), Asn210, and Lys276 each bind substrate. Glu282 is a binding site for Mg(2+).

This sequence belongs to the FBPase class 1 family. In terms of assembly, homotetramer. Mg(2+) is required as a cofactor.

Its subcellular location is the cytoplasm. The catalysed reaction is beta-D-fructose 1,6-bisphosphate + H2O = beta-D-fructose 6-phosphate + phosphate. It functions in the pathway carbohydrate biosynthesis; gluconeogenesis. In Paraburkholderia xenovorans (strain LB400), this protein is Fructose-1,6-bisphosphatase class 1 1.